Reading from the N-terminus, the 372-residue chain is MVECSGTQLWASGRPFIIHGFNTYWLMSFAADQATRPRVTAAIAEAAEAGLNVCRTWAFSDGGYRALQTVPFHYDEDVFQALDFVVSEAKRHNMRLILSLCNNWEDYGGKAQYVRWGKEAGLDLTSEDDFFSDPTIKSYYKAFVEAVVTRINTVTNETYKDDPTILAWELINEPRCPSDPSGDTLQAWIEEMASYVKSIDPVHLLEIGIEGFYGLSTPELLPVNPDEYSGHAGTDFIRNHQAPGIDLASIHVYSDTWLPHSIKENHLQFVDKWMQQHIHDAANLLGMPIVVGEFGVSVKDGKFGNEFREDFMKTVYRIFLSSWKEGVIGGGCLLWQLFPEGAEHMDDGYAVIFAKSPSTLSLLANHLRCLEC.

Substrate is bound by residues Trp-57 and Asn-172. Catalysis depends on Glu-173, which acts as the Proton donor. Tyr-253 is a binding site for substrate. The active-site Nucleophile is the Glu-293. Substrate is bound at residue Trp-335.

Belongs to the glycosyl hydrolase 5 (cellulase A) family. As to expression, expressed in stems and leaves and seeds.

The enzyme catalyses Random hydrolysis of (1-&gt;4)-beta-D-mannosidic linkages in mannans, galactomannans and glucomannans.. The polypeptide is Mannan endo-1,4-beta-mannosidase 8 (MAN8) (Oryza sativa subsp. japonica (Rice)).